A 118-amino-acid polypeptide reads, in one-letter code: Small ribosomal subunit protein uS13 (118 aa).

Residues 94-118 (GLPLRGQRTKTNARTRKGPRKPIRK) are disordered.

Belongs to the universal ribosomal protein uS13 family. As to quaternary structure, part of the 30S ribosomal subunit. Forms a loose heterodimer with protein S19. Forms two bridges to the 50S subunit in the 70S ribosome.

Located at the top of the head of the 30S subunit, it contacts several helices of the 16S rRNA. In the 70S ribosome it contacts the 23S rRNA (bridge B1a) and protein L5 of the 50S subunit (bridge B1b), connecting the 2 subunits; these bridges are implicated in subunit movement. Contacts the tRNAs in the A and P-sites. The protein is Small ribosomal subunit protein uS13 of Chromohalobacter salexigens (strain ATCC BAA-138 / DSM 3043 / CIP 106854 / NCIMB 13768 / 1H11).